The sequence spans 327 residues: Short chain isoprenyl diphosphate synthase (327 aa).

K48, R51, and H80 together coordinate isopentenyl diphosphate. D87 and D91 together coordinate Mg(2+). R96 is a binding site for an all-trans-polyprenyl diphosphate. R97 is a binding site for isopentenyl diphosphate. 5 residues coordinate an all-trans-polyprenyl diphosphate: K176, T177, Q214, K231, and K241.

Belongs to the FPP/GGPP synthase family. In terms of assembly, homodimer. Mg(2+) is required as a cofactor.

It is found in the cytoplasm. This is Short chain isoprenyl diphosphate synthase (idsA) from Methanocaldococcus jannaschii (strain ATCC 43067 / DSM 2661 / JAL-1 / JCM 10045 / NBRC 100440) (Methanococcus jannaschii).